Reading from the N-terminus, the 330-residue chain is G-protein coupled receptor 157 (330 aa).

Residues 1–15 lie on the Extracellular side of the membrane; that stretch reads MPSPAPPTELLPWER. Residues 16–36 form a helical membrane-spanning segment; the sequence is AVVLLSCALSALGSGLLVATH. Over 37 to 48 the chain is Cytoplasmic; sequence ALWPDLRSRARR. Residues 49–69 form a helical membrane-spanning segment; that stretch reads LLLFLSLADLLSAASYFYGVL. Residues 70 to 87 lie on the Extracellular side of the membrane; that stretch reads QDFAGTSWDCVLQGALST. A helical membrane pass occupies residues 88–108; the sequence is FANTSSFFWTVAIALYLYLSI. Over 109 to 119 the chain is Cytoplasmic; that stretch reads VRTTRGPSTDH. The helical transmembrane segment at 120-140 threads the bilayer; it reads LIWAFHLISWGVPLAITVAAV. The Extracellular portion of the chain corresponds to 141 to 166; that stretch reads SLKKIGYDASDVSVGWCWINLEAEDR. A helical transmembrane segment spans residues 167–187; it reads VLWMLLTGKLWEMLAYILLPL. Over 188–227 the chain is Cytoplasmic; the sequence is LYLLVRKHINRAHQALSEYRPICEGRQLQRGSSTSTADKK. A helical transmembrane segment spans residues 228–248; that stretch reads LVLIPLIFICLRVWSTVRFVL. The Extracellular portion of the chain corresponds to 249–259; the sequence is TLCGSPAVQTP. A helical transmembrane segment spans residues 260–280; it reads VLVVLHGIGNTFQGGANCIMF. Residues 281-330 lie on the Cytoplasmic side of the membrane; the sequence is VLCTRAVRTRLFSLCCCCPRPSTQSPPGAPTPPKIGESQESRRTPEVPST. The segment at 301-330 is disordered; sequence PSTQSPPGAPTPPKIGESQESRRTPEVPST. Over residues 317–330 the composition is skewed to basic and acidic residues; sequence ESQESRRTPEVPST.

This sequence belongs to the G-protein coupled receptor 2 family. In terms of tissue distribution, expressed in the primary cilia of radial glial progenitors (RGPs) in the developing neocortex.

Its subcellular location is the cell projection. The protein localises to the cilium membrane. Orphan receptor that promotes neuronal differentiation of radial glial progenitors (RGPs). The activity of this receptor is mediated by a G(q)-protein that activates a phosphatidylinositol-calcium second messenger. This Mus musculus (Mouse) protein is G-protein coupled receptor 157 (Gpr157).